The chain runs to 378 residues: tRNA-specific 2-thiouridylase MnmA (378 aa).

ATP contacts are provided by residues Gly9–Ser16 and Met35. Residues Asn94–Asp96 are interaction with target base in tRNA. The active-site Nucleophile is the Cys99. An intrachain disulfide couples Cys99 to Cys195. Gly123 is an ATP binding site. Residues Lys145–Gln147 are interaction with tRNA. Cys195 functions as the Cysteine persulfide intermediate in the catalytic mechanism. The tract at residues Arg307–Tyr308 is interaction with tRNA.

Belongs to the MnmA/TRMU family.

It is found in the cytoplasm. The catalysed reaction is S-sulfanyl-L-cysteinyl-[protein] + uridine(34) in tRNA + AH2 + ATP = 2-thiouridine(34) in tRNA + L-cysteinyl-[protein] + A + AMP + diphosphate + H(+). Its function is as follows. Catalyzes the 2-thiolation of uridine at the wobble position (U34) of tRNA, leading to the formation of s(2)U34. This is tRNA-specific 2-thiouridylase MnmA from Xanthomonas campestris pv. campestris (strain 8004).